The chain runs to 1163 residues: Type IV pilus biogenesis factor PilY1 (1163 aa).

Residues 1 to 30 (MKSALHQIGKTSLAAALSGAVLLSAQTTHA) form the signal peptide. Positions 329–352 (SVGNADSTSRSLPDGKSYSSQTPY) are disordered. D600, D602, N604, and D608 together coordinate Ca(2+). The integrin-binding motif RGD stretch occupies residues 619-621 (RGD). The Ca(2+) site is built by D851, N853, D855, V857, and D859. The tract at residues 1138 to 1163 (SGECLTVNPGPNTRGRQNWRPIEGKN) is disordered.

It belongs to the PilY1 family. As to quaternary structure, interacts (via C-terminal 532-1163) with host integrins alpha-V/beta-3 (ITGAV/ITGB3) and alpha-V/beta-5 (ITGAV/ITGB5).

The protein localises to the fimbrium. The protein resides in the membrane. It localises to the cytoplasm. It is found in the cytosol. Involved in pilus assembly, twitching motility and adhesion to host cells. Primes type IV pili (T4P) assembly and is required for inclusion of minor pilins PilV, PilW and PilX to the surface pili. Stabilizes assembled pilus fibers likely by antagonizing retraction mediated by PilT. Calcium-binding and calcium release by PilY1 seem to be essential for twitching motility and for regulation of pilus retraction dynamics of PilT. Adhesin for human tissue specifically recognizing a host receptor localized or enriched on basolateral epithelial cell surfaces. Binds host integrins in an calcium-dependent manner in vitro and this interaction may be employed by the bacterium to mediate host epithelial cell binding in vivo. This is Type IV pilus biogenesis factor PilY1 from Pseudomonas aeruginosa (strain PAK).